A 496-amino-acid chain; its full sequence is Ribose import ATP-binding protein RbsA (496 aa).

ABC transporter domains are found at residues 5–242 (IEMK…VGRS) and 252–496 (SQIG…TGGE). 37–44 (GENGAGKS) provides a ligand contact to ATP.

It belongs to the ABC transporter superfamily. Ribose importer (TC 3.A.1.2.1) family. As to quaternary structure, the complex is composed of an ATP-binding protein (RbsA), two transmembrane proteins (RbsC) and a solute-binding protein (RbsB).

It localises to the cell membrane. The catalysed reaction is D-ribose(out) + ATP + H2O = D-ribose(in) + ADP + phosphate + H(+). Part of the ABC transporter complex RbsABC involved in ribose import. Responsible for energy coupling to the transport system. In Bacillus cereus (strain ATCC 14579 / DSM 31 / CCUG 7414 / JCM 2152 / NBRC 15305 / NCIMB 9373 / NCTC 2599 / NRRL B-3711), this protein is Ribose import ATP-binding protein RbsA.